Consider the following 246-residue polypeptide: Probable transcriptional regulatory protein ESA_01378 (246 aa).

It belongs to the TACO1 family.

The protein localises to the cytoplasm. This is Probable transcriptional regulatory protein ESA_01378 from Cronobacter sakazakii (strain ATCC BAA-894) (Enterobacter sakazakii).